Reading from the N-terminus, the 676-residue chain is DNA ligase (676 aa).

NAD(+)-binding positions include 42–46 (DDVYD), 91–92 (SL), and E121. K123 functions as the N6-AMP-lysine intermediate in the catalytic mechanism. NAD(+) contacts are provided by R144, E178, K294, and K318. Zn(2+) contacts are provided by C412, C415, C430, and C435. The 81-residue stretch at 596 to 676 (NSTSEFTGKR…QLQAAMDETK (81 aa)) folds into the BRCT domain.

Belongs to the NAD-dependent DNA ligase family. LigA subfamily. The cofactor is Mg(2+). Mn(2+) serves as cofactor.

The catalysed reaction is NAD(+) + (deoxyribonucleotide)n-3'-hydroxyl + 5'-phospho-(deoxyribonucleotide)m = (deoxyribonucleotide)n+m + AMP + beta-nicotinamide D-nucleotide.. In terms of biological role, DNA ligase that catalyzes the formation of phosphodiester linkages between 5'-phosphoryl and 3'-hydroxyl groups in double-stranded DNA using NAD as a coenzyme and as the energy source for the reaction. It is essential for DNA replication and repair of damaged DNA. The protein is DNA ligase of Levilactobacillus brevis (strain ATCC 367 / BCRC 12310 / CIP 105137 / JCM 1170 / LMG 11437 / NCIMB 947 / NCTC 947) (Lactobacillus brevis).